The chain runs to 291 residues: Sesquiterpene cyclase astC (291 aa).

It belongs to the HAD-like hydrolase superfamily.

It catalyses the reaction (2E,6E)-farnesyl diphosphate = (S,S)-drim-8-en-11-yl diphosphate. The protein operates within secondary metabolite biosynthesis; terpenoid biosynthesis. Functionally, sesquiterpene cyclase; part of the gene cluster that mediates the biosynthesis of astellolides, drimane-type sesquiterpene esters that show antimicrobial, anti-inflammatory, and anti-tumor activities. The first step in astellolide biosynthesis is performed by the sesquiterpene cyclase astC that catalyzes the formation of drimanyl pyrophosphate from farnesyl pyrophosphate. Drimanyl pyrophosphate is then dephosphorylated by the sesquiterpene phosphatase astI to produce drimanyl monophosphate which is further dephosphorylated to drim-8-ene-11-ol by atsK. Drim-8-ene-11-ol is converted to confertifolin, probably by the cytochrome P450 monooxygenase astD and/or the dehydrogenase astE. The cytochrome P450 monooxygenases astB, astF and astJ then hydroxylate confertifolin at C6, C14, or C15 to form trihydroxy confertifolin. The nonribosomal peptide synthetase astA catalyzes ester bond formation between trihydroxy contifolin and benzoic acid (BA) or 4-hydroxy benzoic acid (4HBA), leading to the formation of dideacetyl astellolides A and B, respectively. Finally, the O-acetyltransferase astG converts dideacetyl astellolides A and B into deacetyl astellolides A and B. This is Sesquiterpene cyclase astC from Aspergillus oryzae (strain ATCC 42149 / RIB 40) (Yellow koji mold).